The sequence spans 806 residues: DNA topoisomerase 4 subunit A (806 aa).

The Topo IIA-type catalytic domain occupies 33–499; it reads LPDARDGLKP…EEIKINLEVM (467 aa). The O-(5'-phospho-DNA)-tyrosine intermediate role is filled by Y121.

Belongs to the type II topoisomerase GyrA/ParC subunit family. ParC type 2 subfamily. In terms of assembly, heterotetramer composed of ParC and ParE.

Its subcellular location is the cell membrane. It localises to the cytoplasm. The enzyme catalyses ATP-dependent breakage, passage and rejoining of double-stranded DNA.. Functionally, topoisomerase IV is essential for chromosome segregation. It relaxes supercoiled DNA. Performs the decatenation events required during the replication of a circular DNA molecule. This is DNA topoisomerase 4 subunit A from Bacillus subtilis (strain 168).